Here is a 1302-residue protein sequence, read N- to C-terminus: Multidrug resistance protein homolog 65 (1302 aa).

Positions 1 to 23 are disordered; the sequence is MERDEVSTSSSEGKSQEEAPMAE. Over 1 to 48 the chain is Cytoplasmic; that stretch reads MERDEVSTSSSEGKSQEEAPMAEGLEPTEPIAFLKLFRFSTYGEIGWL. Residues 48–369 form the ABC transmembrane type-1 1 domain; it reads LFFGFIMCCI…TAPFLESFAT (322 aa). Residues 49–69 form a helical membrane-spanning segment; the sequence is FFGFIMCCIKALTLPAVVIIY. At 70–118 the chain is on the extracellular side; that stretch reads SEFTSMLVDRAMQFGTSSNVHALPLFGGGKTLTNASREENNEALYDDSI. N-linked (GlcNAc...) asparagine glycosylation occurs at Asn-103. Residues 119–147 traverse the membrane as a helical segment; that stretch reads SYGILLTIASVVMFISGIFSVDVFNMVAL. The Cytoplasmic segment spans residues 148–194; sequence RQVTRMRIKLFSSVIRQDIGWHDLASKQNFTQSMVDDVEKIRDGISE. The chain crosses the membrane as a helical span at residues 195-215; the sequence is KVGHFVYLVVGFIITVAISFS. Over 216–223 the chain is Extracellular; that stretch reads YGWKLTLA. The helical transmembrane segment at 224–242 threads the bilayer; the sequence is VSSYIPLVILLNYYVAKFQ. The Cytoplasmic segment spans residues 243 to 302; that stretch reads GKLTAREQESYAGAGNLAEEILSSIRTVVSFGGEKSEVQRYENFLVPARKASQWKGAFSG. The chain crosses the membrane as a helical span at residues 303 to 323; the sequence is LSDAVLKSMLYLSCAGAFWYG. The Extracellular segment spans residues 324 to 341; sequence VNLIIDDRNVENKEYTPA. Residues 342–362 form a helical membrane-spanning segment; sequence ILMIAFFGIIVGADNIARTAP. The Cytoplasmic portion of the chain corresponds to 363–731; that stretch reads FLESFATARG…LQLAKQEWCY (369 aa). One can recognise an ABC transporter 1 domain in the interval 405 to 641; it reads VEFQDVFFRY…EGAYYNMVRA (237 aa). An ATP-binding site is contributed by 440–447; the sequence is GSSGCGKS. The chain crosses the membrane as a helical span at residues 732-753; it reads LILGTISAVAVGFLYPAFAVIF. The 289-residue stretch at 732-1020 folds into the ABC transmembrane type-1 2 domain; sequence LILGTISAVA…SLAFTPAFSA (289 aa). The Extracellular segment spans residues 754 to 776; that stretch reads GEFYAALAEKDPEDALRRTAVLS. A helical membrane pass occupies residues 777–798; sequence WACLGLAFLTGLVCFLQTYLFN. At 799–852 the chain is on the cytoplasmic side; sequence YAGIWLTTRMRAMTFNAMVNQEVGWFDDENNSVGALSARLSGEAVDIQGAIGYP. Residues 853–873 form a helical membrane-spanning segment; sequence LSGMIQALSNFISSVSVAMYY. Residue Asn-874 is a topological domain, extracellular. The chain crosses the membrane as a helical span at residues 875-894; it reads WKLALLCLANCPIIVGSVIL. At 895–956 the chain is on the cytoplasmic side; that stretch reads EAKMMSNAVV…VEVLIRQKLR (62 aa). The helical transmembrane segment at 957-977 threads the bilayer; sequence WRGVLNSTMQASAFFAYAVAL. At 978–993 the chain is on the extracellular side; that stretch reads CYGGVLVSEGQLPFQD. The helical transmembrane segment at 994–1014 threads the bilayer; that stretch reads IIKVSETLLYGSMMLAQSLAF. The Cytoplasmic segment spans residues 1015 to 1302; it reads TPAFSAALIA…AKLHKTQKDH (288 aa). Positions 1059-1298 constitute an ABC transporter 2 domain; the sequence is VRYRGIQFRY…GGIYAKLHKT (240 aa). An ATP-binding site is contributed by 1094-1101; that stretch reads GHSGCGKS.

It belongs to the ABC transporter superfamily. ABCB family. Multidrug resistance exporter (TC 3.A.1.201) subfamily.

It localises to the membrane. The catalysed reaction is ATP + H2O + xenobioticSide 1 = ADP + phosphate + xenobioticSide 2.. The polypeptide is Multidrug resistance protein homolog 65 (Mdr65) (Drosophila melanogaster (Fruit fly)).